A 156-amino-acid chain; its full sequence is 6,7-dimethyl-8-ribityllumazine synthase (156 aa).

5-amino-6-(D-ribitylamino)uracil contacts are provided by residues Trp-22, 56 to 58 (AYE), and 80 to 82 (AVI). 85-86 (DT) serves as a coordination point for (2S)-2-hydroxy-3-oxobutyl phosphate. His-88 acts as the Proton donor in catalysis. Phe-113 lines the 5-amino-6-(D-ribitylamino)uracil pocket. Position 127 (Arg-127) interacts with (2S)-2-hydroxy-3-oxobutyl phosphate.

This sequence belongs to the DMRL synthase family.

The catalysed reaction is (2S)-2-hydroxy-3-oxobutyl phosphate + 5-amino-6-(D-ribitylamino)uracil = 6,7-dimethyl-8-(1-D-ribityl)lumazine + phosphate + 2 H2O + H(+). Its pathway is cofactor biosynthesis; riboflavin biosynthesis; riboflavin from 2-hydroxy-3-oxobutyl phosphate and 5-amino-6-(D-ribitylamino)uracil: step 1/2. In terms of biological role, catalyzes the formation of 6,7-dimethyl-8-ribityllumazine by condensation of 5-amino-6-(D-ribitylamino)uracil with 3,4-dihydroxy-2-butanone 4-phosphate. This is the penultimate step in the biosynthesis of riboflavin. This is 6,7-dimethyl-8-ribityllumazine synthase from Deinococcus deserti (strain DSM 17065 / CIP 109153 / LMG 22923 / VCD115).